Reading from the N-terminus, the 508-residue chain is General transcription factor IIF subunit 1 (508 aa).

A2 carries the N-acetylalanine modification. The residue at position 156 (T156) is a Phosphothreonine. Residues 177–446 are disordered; it reads MQQRRLKDQD…TPSSGDVQVT (270 aa). S217, S218, S221, and S224 each carry phosphoserine. Basic residues predominate over residues 232-251; the sequence is SKAKKKAPVTKAGRKKKKKK. 2 stretches are compositionally biased toward acidic residues: residues 255–270 and 303–325; these read DEAF…EGQE and EQSE…EEEE. Residue T331 is modified to Phosphothreonine. The span at 343-355 shows a compositional bias: acidic residues; it reads DDSDSSEESDIDS. Over residues 364-374 the composition is skewed to basic residues; the sequence is AKKKTPPKRER. Phosphoserine occurs at positions 377, 380, 381, and 385. Positions 378–388 are enriched in polar residues; sequence GGSSKGTSRPG. T389 is modified (phosphothreonine). A compositionally biased stretch (low complexity) spans 389–406; sequence TPSAEAASTSSTLRAAAS. S391 carries the post-translational modification Phosphoserine. N6-acetyllysine is present on K407. Positions 428-443 are enriched in polar residues; that stretch reads GPQSLSGKSTPSSGDV. A phosphoserine mark is found at S431, S433, and S436. Phosphothreonine is present on T437. Residue S440 is modified to Phosphoserine.

It belongs to the TFIIF alpha subunit family. In terms of assembly, heterodimer of an alpha and a beta subunit. Interacts with GTF2F2, CTDP1, TAF6/TAFII80 and URI1. Interacts with GTF2B (via C-terminus and preferentially via acetylated form); this interaction prevents binding of GTF2B to GTF2F2. Part of TBP-based Pol II pre-initiation complex (PIC), in which Pol II core assembles with general transcription factors and other specific initiation factors including GTF2E1, GTF2E2, GTF2F1, GTF2F2, TCEA1, ERCC2, ERCC3, GTF2H2, GTF2H3, GTF2H4, GTF2H5, GTF2A1, GTF2A2, GTF2B and TBP; this large multi-subunit PIC complex mediates DNA unwinding and targets Pol II core to the transcription start site where the first phosphodiester bond forms. Phosphorylated on Ser and other residues by TAF1 and casein kinase II-like kinases.

It is found in the nucleus. Its function is as follows. TFIIF is a general transcription initiation factor that binds to RNA polymerase II and helps to recruit it to the initiation complex in collaboration with TFIIB. It promotes transcription elongation. In Mus musculus (Mouse), this protein is General transcription factor IIF subunit 1 (Gtf2f1).